We begin with the raw amino-acid sequence, 67 residues long: Large ribosomal subunit protein bL35 (67 aa).

The protein belongs to the bacterial ribosomal protein bL35 family.

In Rhizorhabdus wittichii (strain DSM 6014 / CCUG 31198 / JCM 15750 / NBRC 105917 / EY 4224 / RW1) (Sphingomonas wittichii), this protein is Large ribosomal subunit protein bL35.